The sequence spans 89 residues: Small ribosomal subunit protein uS15 (89 aa).

This sequence belongs to the universal ribosomal protein uS15 family. In terms of assembly, part of the 30S ribosomal subunit. Forms a bridge to the 50S subunit in the 70S ribosome, contacting the 23S rRNA.

Functionally, one of the primary rRNA binding proteins, it binds directly to 16S rRNA where it helps nucleate assembly of the platform of the 30S subunit by binding and bridging several RNA helices of the 16S rRNA. In terms of biological role, forms an intersubunit bridge (bridge B4) with the 23S rRNA of the 50S subunit in the ribosome. This is Small ribosomal subunit protein uS15 from Psychromonas ingrahamii (strain DSM 17664 / CCUG 51855 / 37).